The chain runs to 193 residues: MTTVSRETHERLERFADLLVQWNAKINLVSPRDIAQLWPRHIEDSLQLAELIPEGKTITDLGSGGGFPGIILAIATGNPVTLIESDQRKCAFLREAGRICEARVTVIAKRIEAASPPPADIITARALAPLNRLLEWARPLLKEDGFCLFLKGQKAQAELTEASADWHMSHSIIPSRTDPGGAIIKVSDFKRVV.

S-adenosyl-L-methionine-binding positions include glycine 62, phenylalanine 67, 111-112 (IE), and arginine 125.

Belongs to the methyltransferase superfamily. RNA methyltransferase RsmG family.

The protein localises to the cytoplasm. The enzyme catalyses guanosine(527) in 16S rRNA + S-adenosyl-L-methionine = N(7)-methylguanosine(527) in 16S rRNA + S-adenosyl-L-homocysteine. Its function is as follows. Specifically methylates the N7 position of guanine in position 527 of 16S rRNA. The polypeptide is Ribosomal RNA small subunit methyltransferase G (Gluconobacter oxydans (strain 621H) (Gluconobacter suboxydans)).